Reading from the N-terminus, the 368-residue chain is Isocitrate dehydrogenase [NAD] subunit 2, mitochondrial (368 aa).

The N-terminal 14 residues, 1–14 (MFRQSIVKQSCRFL), are a transit peptide targeting the mitochondrion. Substrate is bound by residues Arg-118, Arg-128, Arg-149, and Asp-236. The Mg(2+) site is built by Asp-236, Asp-262, and Asp-266.

This sequence belongs to the isocitrate and isopropylmalate dehydrogenases family. In terms of assembly, octamer of two non-identical subunits IDH1 and IDH2. It depends on Mg(2+) as a cofactor. The cofactor is Mn(2+).

The protein resides in the mitochondrion. The catalysed reaction is D-threo-isocitrate + NAD(+) = 2-oxoglutarate + CO2 + NADH. Its function is as follows. Performs an essential role in the oxidative function of the citric acid cycle. The chain is Isocitrate dehydrogenase [NAD] subunit 2, mitochondrial (IDH2) from Kluyveromyces lactis (strain ATCC 8585 / CBS 2359 / DSM 70799 / NBRC 1267 / NRRL Y-1140 / WM37) (Yeast).